The chain runs to 167 residues: MAEEKLTFIPTADLVDIIGSDVRSCDTQFRDLGGVVEFCGKITTVKCFQDNALLKSVLQEDNPGGVLVIDGDASMHTALVGDIIAGLGKDHGWAGVVINGPIRDSKVIGQMEFGCKALGTNPRKSTKTGEGERDVTVSFGGVDFIPGEYIYCDSDGIIVSDEIVQPV.

Residues 81 to 84 (GDII) and Arg-103 each bind substrate. Position 104 (Asp-104) interacts with a divalent metal cation.

The protein belongs to the class II aldolase/RraA-like family. As to quaternary structure, homotrimer. A divalent metal cation serves as cofactor.

It catalyses the reaction 4-hydroxy-4-methyl-2-oxoglutarate = 2 pyruvate. It carries out the reaction oxaloacetate + H(+) = pyruvate + CO2. Catalyzes the aldol cleavage of 4-hydroxy-4-methyl-2-oxoglutarate (HMG) into 2 molecules of pyruvate. Also contains a secondary oxaloacetate (OAA) decarboxylase activity due to the common pyruvate enolate transition state formed following C-C bond cleavage in the retro-aldol and decarboxylation reactions. The chain is Putative 4-hydroxy-4-methyl-2-oxoglutarate aldolase from Corynebacterium jeikeium (strain K411).